The sequence spans 121 residues: Putative ferredoxin (121 aa).

The protein to E.coli YkgJ.

The sequence is that of Putative ferredoxin from Acinetobacter calcoaceticus.